The primary structure comprises 451 residues: Tryptophan biosynthesis protein TrpCF (451 aa).

The interval 1-256 is indole-3-glycerol phosphate synthase; sequence MQETILNKII…TNIKSLIIGD (256 aa). Residues 257–451 form an N-(5'-phosphoribosyl)anthranilate isomerase region; it reads NKVCGLTRII…ISLIFKKLTF (195 aa).

It in the N-terminal section; belongs to the TrpC family. This sequence in the C-terminal section; belongs to the TrpF family. As to quaternary structure, monomer.

It catalyses the reaction N-(5-phospho-beta-D-ribosyl)anthranilate = 1-(2-carboxyphenylamino)-1-deoxy-D-ribulose 5-phosphate. It carries out the reaction 1-(2-carboxyphenylamino)-1-deoxy-D-ribulose 5-phosphate + H(+) = (1S,2R)-1-C-(indol-3-yl)glycerol 3-phosphate + CO2 + H2O. It functions in the pathway amino-acid biosynthesis; L-tryptophan biosynthesis; L-tryptophan from chorismate: step 3/5. Its pathway is amino-acid biosynthesis; L-tryptophan biosynthesis; L-tryptophan from chorismate: step 4/5. Its function is as follows. Bifunctional enzyme that catalyzes two sequential steps of tryptophan biosynthetic pathway. The first reaction is catalyzed by the isomerase, coded by the TrpF domain; the second reaction is catalyzed by the synthase, coded by the TrpC domain. The polypeptide is Tryptophan biosynthesis protein TrpCF (trpC) (Buchnera aphidicola subsp. Schizaphis graminum (strain Sg)).